The sequence spans 62 residues: Large ribosomal subunit protein eL24 (62 aa).

Zn(2+)-binding residues include Cys-6, Cys-9, Cys-32, and Cys-36. A C4-type zinc finger spans residues 6 to 36 (CSFCEGTIEPGCGKKYVKKDGSVMHFCSSKC).

The protein belongs to the eukaryotic ribosomal protein eL24 family. Part of the 50S ribosomal subunit. Forms a cluster with proteins L3 and L14. Requires Zn(2+) as cofactor.

In terms of biological role, binds to the 23S rRNA. This is Large ribosomal subunit protein eL24 from Methanococcus maripaludis (strain C7 / ATCC BAA-1331).